Here is a 463-residue protein sequence, read N- to C-terminus: Probable glycosyltransferase 3 (463 aa).

Residues 1-20 form a disordered region; the sequence is MAVTGGGRPAARQQAARGKQ. Residues 1–24 lie on the Cytoplasmic side of the membrane; the sequence is MAVTGGGRPAARQQAARGKQMQRT. A compositionally biased stretch (low complexity) spans 9 to 20; the sequence is PAARQQAARGKQ. Residues 25-47 form a helical; Signal-anchor for type II membrane protein membrane-spanning segment; the sequence is FNNVKITLICGFITLLVLRGTVG. The Lumenal segment spans residues 48-463; that stretch reads INLLTYGVGG…ALKMDAKIES (416 aa). The disordered stretch occupies residues 82 to 125; that stretch reads EIRSDTDDDDDDEEEEPLGVDASTTTTTNSTTTTATAARRRSSN. Positions 87-99 are enriched in acidic residues; the sequence is TDDDDDDEEEEPL. Over residues 103–118 the composition is skewed to low complexity; that stretch reads ASTTTTTNSTTTTATA. 3 N-linked (GlcNAc...) asparagine glycosylation sites follow: N110, N125, and N442.

Belongs to the glycosyltransferase 34 family.

It is found in the golgi apparatus membrane. Functionally, probable glycosyltransferase that may be involved in the biosynthesis of xyloglucan. The protein is Probable glycosyltransferase 3 of Oryza sativa subsp. indica (Rice).